The primary structure comprises 430 residues: Adenylosuccinate synthetase (430 aa).

Residues 12 to 18 (GDEGKGK) and 40 to 42 (GHT) each bind GTP. The active-site Proton acceptor is aspartate 13. Mg(2+) contacts are provided by aspartate 13 and glycine 40. Residues 13–16 (DEGK), 38–41 (NAGH), threonine 130, arginine 144, glutamine 225, threonine 240, and arginine 304 each bind IMP. Histidine 41 (proton donor) is an active-site residue. 300 to 306 (STTGRPR) provides a ligand contact to substrate. GTP-binding positions include arginine 306, 332 to 334 (KLD), and 414 to 416 (SVG).

Belongs to the adenylosuccinate synthetase family. Homodimer. Mg(2+) is required as a cofactor.

Its subcellular location is the cytoplasm. It carries out the reaction IMP + L-aspartate + GTP = N(6)-(1,2-dicarboxyethyl)-AMP + GDP + phosphate + 2 H(+). It participates in purine metabolism; AMP biosynthesis via de novo pathway; AMP from IMP: step 1/2. In terms of biological role, plays an important role in the de novo pathway of purine nucleotide biosynthesis. Catalyzes the first committed step in the biosynthesis of AMP from IMP. The protein is Adenylosuccinate synthetase of Pelobacter propionicus (strain DSM 2379 / NBRC 103807 / OttBd1).